A 473-amino-acid polypeptide reads, in one-letter code: 1-deoxy-D-xylulose 5-phosphate reductoisomerase, chloroplastic (473 aa).

The N-terminal 49 residues, 1–49, are a transit peptide targeting the chloroplast; sequence MALKVVSFPGDLAAVSFLDSNRGGAFNQLKVDLPFQTRDRRAVSLRRTC. Residues Thr-85, Gly-86, Ser-87, Ile-88, Gly-111, Asn-113, and Asn-199 each coordinate NADPH. Lys-200 is a 1-deoxy-D-xylulose 5-phosphate binding site. Glu-201 contacts NADPH. Asp-225 contributes to the Mn(2+) binding site. Positions 226, 227, 251, and 274 each coordinate 1-deoxy-D-xylulose 5-phosphate. Residue Glu-227 coordinates Mn(2+). Gly-280 is a binding site for NADPH. 1-deoxy-D-xylulose 5-phosphate contacts are provided by Ser-287, Asn-292, Lys-293, and Glu-296. Glu-296 is a Mn(2+) binding site.

This sequence belongs to the DXR family. The cofactor is Mn(2+). Mg(2+) is required as a cofactor.

The protein resides in the plastid. The protein localises to the chloroplast stroma. It catalyses the reaction 2-C-methyl-D-erythritol 4-phosphate + NADP(+) = 1-deoxy-D-xylulose 5-phosphate + NADPH + H(+). It functions in the pathway isoprenoid biosynthesis; isopentenyl diphosphate biosynthesis via DXP pathway; isopentenyl diphosphate from 1-deoxy-D-xylulose 5-phosphate: step 1/6. In terms of biological role, enzyme of the plastid non-mevalonate pathway for isoprenoid biosynthesis that catalyzes the NADPH-dependent rearrangement and reduction of 1-deoxy-D-xylulose-5-phosphate (DXP) to 2-C-methyl-D-erythritol 4-phosphate (MEP). Required for chloroplast development. In Oryza sativa subsp. japonica (Rice), this protein is 1-deoxy-D-xylulose 5-phosphate reductoisomerase, chloroplastic (DXR).